Reading from the N-terminus, the 235-residue chain is Serine protease SplA (235 aa).

A signal peptide spans 1 to 35 (MNENVMVKGLTALTILTSLGFAENISNQPHSIAKA). Active-site charge relay system residues include His-74, Asp-113, and Ser-189.

This sequence belongs to the peptidase S1B family.

It localises to the secreted. The chain is Serine protease SplA (splA) from Staphylococcus aureus (strain MSSA476).